The following is a 107-amino-acid chain: Phosphoribosyl-ATP pyrophosphatase (107 aa).

Belongs to the PRA-PH family.

The protein localises to the cytoplasm. The enzyme catalyses 1-(5-phospho-beta-D-ribosyl)-ATP + H2O = 1-(5-phospho-beta-D-ribosyl)-5'-AMP + diphosphate + H(+). It functions in the pathway amino-acid biosynthesis; L-histidine biosynthesis; L-histidine from 5-phospho-alpha-D-ribose 1-diphosphate: step 2/9. The chain is Phosphoribosyl-ATP pyrophosphatase (hisE) from Rhizobium meliloti (strain 1021) (Ensifer meliloti).